The chain runs to 353 residues: Phenol 2-monooxygenase, reductase component DmpP (353 aa).

Residues 3–93 (YNVTIEPTGE…DLVIEADVDA (91 aa)) form the 2Fe-2S ferredoxin-type domain. [2Fe-2S] cluster is bound by residues Cys37, Cys42, Cys45, and Cys77. One can recognise an FAD-binding FR-type domain in the interval 102-201 (VEDYRGVVSA…SGPYGQFFVR (100 aa)).

In terms of assembly, the multicomponent enzyme phenol hydroxylase is formed by DmpL (P1 component), DmpM (P2 component), DmpN (P3 component), DmpO (P4 component) and DmpP (P5 component). FAD is required as a cofactor. It depends on [2Fe-2S] cluster as a cofactor.

It carries out the reaction phenol + NADH + O2 + H(+) = catechol + NAD(+) + H2O. Its pathway is aromatic compound metabolism; phenol degradation. Its function is as follows. Part of a multicomponent enzyme which catalyzes the degradation of phenol and some of its methylated derivatives. DmpP probably transfers electrons from NADH, via FAD and the iron-sulfur center, to the oxygenase component of the complex. Required for growth on phenol and for in vitro phenol hydroxylase activity. The chain is Phenol 2-monooxygenase, reductase component DmpP from Pseudomonas sp. (strain CF600).